We begin with the raw amino-acid sequence, 252 residues long: Ribosomal RNA small subunit methyltransferase J (252 aa).

Residues 105–106, 121–122, and aspartate 175 contribute to the S-adenosyl-L-methionine site; these read RD and ER.

Belongs to the methyltransferase superfamily. RsmJ family.

The protein localises to the cytoplasm. It catalyses the reaction guanosine(1516) in 16S rRNA + S-adenosyl-L-methionine = N(2)-methylguanosine(1516) in 16S rRNA + S-adenosyl-L-homocysteine + H(+). Functionally, specifically methylates the guanosine in position 1516 of 16S rRNA. This is Ribosomal RNA small subunit methyltransferase J from Pasteurella multocida (strain Pm70).